The following is a 432-amino-acid chain: ATP-dependent RNA helicase SUB2 (432 aa).

The span at 1–17 (MSAEGQEELLDYSDSEE) shows a compositional bias: acidic residues. Residues 1-35 (MSAEGQEELLDYSDSEEIAVPSNAPEAGADGADKD) are disordered. Residues 48–76 (TGFRDFLLKPELLRAIGDCGFEHPSEVQQ) carry the Q motif motif. One can recognise a Helicase ATP-binding domain in the interval 79 to 254 (IPQSILGTDV…KKFMQNPLEI (176 aa)). Residue 92 to 99 (AKSGLGKT) coordinates ATP. Positions 201–204 (DECD) match the DEAD box motif. The Helicase C-terminal domain maps to 266–427 (GLQQYYLKLD…EFPEEGVDSS (162 aa)).

It belongs to the DEAD box helicase family. DECD subfamily.

Its subcellular location is the nucleus. It carries out the reaction ATP + H2O = ADP + phosphate + H(+). Its function is as follows. ATP-binding RNA helicase involved in transcription elongation and required for the export of mRNA out of the nucleus. SUB2 also plays a role in pre-mRNA splicing and spliceosome assembly. May be involved in rDNA and telomeric silencing, and maintenance of genome integrity. This is ATP-dependent RNA helicase SUB2 (SUB2) from Meyerozyma guilliermondii (strain ATCC 6260 / CBS 566 / DSM 6381 / JCM 1539 / NBRC 10279 / NRRL Y-324) (Yeast).